A 337-amino-acid chain; its full sequence is MALQALHSSGVGLRRILAHFPEDLSLAFAYGSAVYRQAGPSAHQENPMLDLVFTVDDPVAWHAMNLKKNWSHYSFLKLLGPRIISSIQNNYGAGVYFNPLIRCDGKLIKYGVISTGTLIEDLLNWNNLYIAGRLQKPVKIVSMNENMALRAALDKNLRSAVTTACLMLPESFSEEDLFIEIAGLSYSGDFRMVIGEEKSKVLNIVKPNVGHFRELYESILQKDPQVVYKMHQGQLEIDKSPEGQFTQLMTLPRTLQQQINHIMDPPGRNRDVEETLLQVAQDPDCGDVVRLAISSIVRPSSIRQSTKGLFTAGMKKSVIYSSRKLNKMWKGWMSKAS.

This sequence belongs to the TAM41 family. Mg(2+) serves as cofactor.

It localises to the mitochondrion inner membrane. The enzyme catalyses a 1,2-diacyl-sn-glycero-3-phosphate + CTP + H(+) = a CDP-1,2-diacyl-sn-glycerol + diphosphate. It functions in the pathway phospholipid metabolism; CDP-diacylglycerol biosynthesis; CDP-diacylglycerol from sn-glycerol 3-phosphate: step 3/3. Its function is as follows. Catalyzes the conversion of phosphatidic acid (PA) to CDP-diacylglycerol (CDP-DAG), an essential intermediate in the synthesis of phosphatidylglycerol, cardiolipin and phosphatidylinositol. The protein is Phosphatidate cytidylyltransferase, mitochondrial (Tamm41) of Mus musculus (Mouse).